The primary structure comprises 95 residues: Co-chaperonin GroES (95 aa).

It belongs to the GroES chaperonin family. As to quaternary structure, heptamer of 7 subunits arranged in a ring. Interacts with the chaperonin GroEL.

It localises to the cytoplasm. Functionally, together with the chaperonin GroEL, plays an essential role in assisting protein folding. The GroEL-GroES system forms a nano-cage that allows encapsulation of the non-native substrate proteins and provides a physical environment optimized to promote and accelerate protein folding. GroES binds to the apical surface of the GroEL ring, thereby capping the opening of the GroEL channel. The sequence is that of Co-chaperonin GroES from Methylocella silvestris (strain DSM 15510 / CIP 108128 / LMG 27833 / NCIMB 13906 / BL2).